The following is a 519-amino-acid chain: C-glycoside 3-oxidase (519 aa).

Glu41 serves as a coordination point for FAD. The segment at 43–93 (GPTVSNPPGAHVKNIEDPERRSHAQRASEGPGAGAETVNSPGAVKSGERRA) is disordered. Over residues 55-64 (KNIEDPERRS) the composition is skewed to basic and acidic residues. FAD contacts are provided by Ser118, Asn120, Met124, Thr129, Ala131, and Val234. His440 (proton acceptor) is an active-site residue. Positions 474 and 486 each coordinate FAD.

The protein belongs to the GMC oxidoreductase family. Monomer. FAD is required as a cofactor.

The enzyme catalyses isovitexin + O2 = 3''-dehydroisovitexin + H2O2. The catalysed reaction is isoorientin + O2 = 3''-dehydroisoorientin + H2O2. It carries out the reaction mangiferin + O2 = 3'-dehydromangiferin + H2O2. In terms of biological role, FAD-dependent C-glycoside-metabolizing enzyme that participates in the degradation of certain C-glycosides by catalyzing the oxidation of the hydroxyl group at the C3 position of the sugar moiety. Shows oxidase activity toward various C-glycosides such as isovitexin, isoorientin and mangiferin but cannot use carminic acid, puerarin, orientin or aloesin. Shows weak activity (100 to 1000-fold lower) with O-glycosides. Probably plays a crucial role in the metabolism of C-glycosides in nature. This is C-glycoside 3-oxidase from Arthrobacter globiformis (strain ATCC 8010 / DSM 20124 / JCM 1332 / NBRC 12137 / NCIMB 8907 / NRRL B-2979 / 168).